The chain runs to 492 residues: 2,3-bisphosphoglycerate-independent phosphoglycerate mutase (492 aa).

Asp11 and Ser61 together coordinate Mn(2+). The Phosphoserine intermediate role is filled by Ser61. Substrate-binding positions include His118, 147-148 (RD), Arg178, Arg184, 248-251 (RNDR), and Lys320. Mn(2+) contacts are provided by Asp386, His390, Asp427, His428, and His445.

The protein belongs to the BPG-independent phosphoglycerate mutase family. Monomer. Mn(2+) serves as cofactor.

The enzyme catalyses (2R)-2-phosphoglycerate = (2R)-3-phosphoglycerate. It functions in the pathway carbohydrate degradation; glycolysis; pyruvate from D-glyceraldehyde 3-phosphate: step 3/5. Its function is as follows. Catalyzes the interconversion of 2-phosphoglycerate and 3-phosphoglycerate. In Campylobacter jejuni subsp. jejuni serotype O:23/36 (strain 81-176), this protein is 2,3-bisphosphoglycerate-independent phosphoglycerate mutase.